We begin with the raw amino-acid sequence, 392 residues long: Putative nicotinate phosphoribosyltransferase (392 aa).

Residues tyrosine 21, phenylalanine 138, and threonine 179 each coordinate nicotinate. The residue at position 182 (histidine 182) is a Phosphohistidine. Nicotinate is bound at residue arginine 235. Residues serine 240, glycine 272, and threonine 293 each coordinate 5-phospho-alpha-D-ribose 1-diphosphate. Zn(2+)-binding residues include cysteine 330, cysteine 333, cysteine 348, and cysteine 350.

This sequence belongs to the NAPRTase family. Highly divergent. Homodimer. Forms a trimer of dimers in the crystal. Post-translationally, transiently phosphorylated on a His residue during the reaction cycle. Phosphorylation strongly increases the affinity for substrates and increases the rate of nicotinate D-ribonucleotide production. Dephosphorylation regenerates the low-affinity form of the enzyme, leading to product release.

The catalysed reaction is nicotinate + 5-phospho-alpha-D-ribose 1-diphosphate + ATP + H2O = nicotinate beta-D-ribonucleotide + ADP + phosphate + diphosphate. Its pathway is cofactor biosynthesis; NAD(+) biosynthesis; nicotinate D-ribonucleotide from nicotinate: step 1/1. Functionally, catalyzes the synthesis of beta-nicotinate D-ribonucleotide from nicotinate and 5-phospho-D-ribose 1-phosphate at the expense of ATP. The sequence is that of Putative nicotinate phosphoribosyltransferase from Thermoplasma acidophilum (strain ATCC 25905 / DSM 1728 / JCM 9062 / NBRC 15155 / AMRC-C165).